A 288-amino-acid chain; its full sequence is ATP synthase gamma chain (288 aa).

This sequence belongs to the ATPase gamma chain family. As to quaternary structure, F-type ATPases have 2 components, CF(1) - the catalytic core - and CF(0) - the membrane proton channel. CF(1) has five subunits: alpha(3), beta(3), gamma(1), delta(1), epsilon(1). CF(0) has three main subunits: a, b and c.

Its subcellular location is the cell membrane. Its function is as follows. Produces ATP from ADP in the presence of a proton gradient across the membrane. The gamma chain is believed to be important in regulating ATPase activity and the flow of protons through the CF(0) complex. This Bacillus pumilus (strain SAFR-032) protein is ATP synthase gamma chain.